Consider the following 83-residue polypeptide: ATP synthase subunit c, chloroplastic (83 aa).

2 consecutive transmembrane segments (helical) span residues 3 to 23 and 57 to 77; these read PIISAASVIAAGLSVGLAAIG and LAFMEALTIYGLVVALSLLFA.

This sequence belongs to the ATPase C chain family. In terms of assembly, F-type ATPases have 2 components, F(1) - the catalytic core - and F(0) - the membrane proton channel. F(1) has five subunits: alpha(3), beta(3), gamma(1), delta(1), epsilon(1). F(0) has four main subunits: a(1), b(1), b'(1) and c(10-14). The alpha and beta chains form an alternating ring which encloses part of the gamma chain. F(1) is attached to F(0) by a central stalk formed by the gamma and epsilon chains, while a peripheral stalk is formed by the delta, b and b' chains.

It is found in the plastid. The protein resides in the chloroplast thylakoid membrane. In terms of biological role, f(1)F(0) ATP synthase produces ATP from ADP in the presence of a proton or sodium gradient. F-type ATPases consist of two structural domains, F(1) containing the extramembraneous catalytic core and F(0) containing the membrane proton channel, linked together by a central stalk and a peripheral stalk. During catalysis, ATP synthesis in the catalytic domain of F(1) is coupled via a rotary mechanism of the central stalk subunits to proton translocation. Key component of the F(0) channel; it plays a direct role in translocation across the membrane. A homomeric c-ring of between 10-14 subunits forms the central stalk rotor element with the F(1) delta and epsilon subunits. The protein is ATP synthase subunit c, chloroplastic of Diacronema lutheri (Unicellular marine alga).